We begin with the raw amino-acid sequence, 956 residues long: Transient receptor potential channel pyrexia (956 aa).

The Cytoplasmic portion of the chain corresponds to 1–491; sequence MENVRFSIIE…LFLKWRRIRK (491 aa). ANK repeat units follow at residues 132 to 161, 166 to 195, 198 to 227, 231 to 260, 265 to 294, 298 to 327, 331 to 362, and 366 to 395; these read RGRTPLHFACCRANAPIAKVLLDFGADPNR, KEVTSLHCAASSKSVECILLLLRRKASINI, EKRSALHYAIDVNAVDCVEILLKYGADPNT, YTETPLHTASAAGFAKCVQLLLSHNADVRS, GKVTALHLAAENDYVECARLLLEHRAEVDC, SHQTPLHLACLSQSIGTVDLLISYGANVNA, DGRTALHAAIVKQSRSLDCCNALLKAGADVNK, and YGYTPLHIAALNEFSSCVYTFIEHGADITA. A helical membrane pass occupies residues 492–512; sequence FFLMSLAYHTLFVILFTFYVI. The Extracellular portion of the chain corresponds to 513 to 525; sequence WVYVRCCKKEELC. A helical membrane pass occupies residues 526–546; that stretch reads VAPGYVSTIGYLVIILNLILL. Residues 547–565 lie on the Cytoplasmic side of the membrane; the sequence is GKEVFQMAHGLRGYAKYWE. The chain crosses the membrane as a helical span at residues 566–584; the sequence is NWLQWTIGTGVLLCVTPET. Over 585 to 601 the chain is Extracellular; it reads VRTDDLTAVPVWQHHVA. A helical membrane pass occupies residues 602–622; that stretch reads AIVILLVWLELMMLVGRFPIF. Over 623 to 638 the chain is Cytoplasmic; sequence GVYVQMFTKVAVNFAK. Residues 639 to 659 form a helical membrane-spanning segment; that stretch reads FLLAYICLLVAFGLSFAVLFN. The Extracellular segment spans residues 660–701; sequence DYPAFENITWSFLKSITMMSGELEFEDIFYGDYAVKFPVTAH. A glycan (N-linked (GlcNAc...) asparagine) is linked at Asn666. Residues 702-722 traverse the membrane as a helical segment; sequence IIFLSFVLLVTVILTNLMVGL. Topologically, residues 723 to 956 are cytoplasmic; the sequence is AVSDIQGLQV…VASSHIRRHR (234 aa).

Belongs to the transient receptor (TC 1.A.4) family. STrpC subfamily. Homooligomer; between isoform A and isoform B. As to expression, expressed in various peripheral nerves and the central nerves in embryos. In adults, it is expressed in sensory neurons lying beneath the bristles around eyes, neurons innervating the bristles on the back of thorax and neurons in maxillary palps, proboscis and antennae. Expressed in multidendritic neurons, which mediate temperature sensing, as well as non-multidendritic neurons in larval epidermis. Localizes ubiquitously throughout neurites.

The protein localises to the membrane. Its function is as follows. Receptor-activated non-selective cation channel involved in protection or tolerance from high temperature stress. Activated by temperatures above 40 degrees Celsius. More permeable to K(+) than to Na(+). May act in stress protection allow flies to survive in natural environments. In Drosophila melanogaster (Fruit fly), this protein is Transient receptor potential channel pyrexia (pyx).